The primary structure comprises 178 residues: Fucolectin-1 (178 aa).

An N-terminal signal peptide occupies residues 1-20; the sequence is MKVKTIMLLFQILAISTIKS. Residues 29 to 178 are F5/8 type C-like; it reads QENVAVRGKA…VEVNALLPVN (150 aa). Residues D59, N61, and S70 each contribute to the Ca(2+) site. Cystine bridges form between C71–C167, C103–C104, and C129–C145. H73 and R100 together coordinate alpha-L-fucose. Residues 100–102 carry the Cell attachment site motif; sequence RGD. An alpha-L-fucose-binding site is contributed by R107. Residues C167 and E168 each contribute to the Ca(2+) site.

Belongs to the fucolectin family. As to quaternary structure, homotrimer. In terms of tissue distribution, parenchymal hepatocytes.

The protein resides in the secreted. The protein localises to the extracellular space. Functionally, acts as a defensive agent. Recognizes blood group fucosylated oligosaccharides including A, B, H and Lewis B-type antigens. Does not recognize Lewis A antigen and has low affinity for monovalent haptens. The chain is Fucolectin-1 from Anguilla japonica (Japanese eel).